Reading from the N-terminus, the 430-residue chain is MALNEGQIVTLAVDEIIETISAITPMAQKAKKYTPPAASMQRSSNTIWMPVEQESPTQEGWDLTDKATGLLELNVAVNMGEPDNDFFQLRADDLRDETAYRRRIQSAARKLANNVELKVANMAAEMGSLVITSPDAIGTNTADAWNFVADAEEIMFSRELNRDMGTSYFFNPQDYKKAGYDLTKRDIFGRIPEEAYRDGTIQRQVAGFDDVLRSPKLPVLTKSTATGITVSGAQSFKPVAWQLDNDGNKVNVDNRFATVTLSATTGMKRGDKISFAGVKFLGQMAKNVLAQDATFSVVRVVDGTHVEITPKPVALDDVSLSPEQRAYANVNTSLADAMAVNILNVKDARTNVFWADDAIRIVSQPIPANHELFAGMKTTSFSIPDVGLNGIFATQGDISTLSGLCRIALWYGVNATRPEAIGVGLPGQTA.

Residues 2–56 (ALNEGQIVTLAVDEIIETISAITPMAQKAKKYTPPAASMQRSSNTIWMPVEQESP) are binding to the capsid assembly scaffolding protein. An i domain region spans residues 223–345 (STATGITVSG…DAMAVNILNV (123 aa)).

This sequence belongs to the P22 phage major capsid protein family. As to quaternary structure, interacts (via N-terminus) with the capsid assembly scaffolding protein (via C-terminus); capsid proteins and scaffolding proteins form building blocks that assemble to form the procapsid. Interacts with the portal protein.

It is found in the virion. In terms of biological role, self-assembles to form an icosahedral capsid with a T=7 symmetry. The protein is Major capsid protein (5) of Salmonella phage P22 (Bacteriophage P22).